Reading from the N-terminus, the 769-residue chain is Major inner protein P1 (769 aa).

Homodimer. Associates with the polymerase complex.

The protein localises to the virion. Its function is as follows. P1 is the major inner capsid (core) protein of the polyhedral procapsid, which is responsible for genomic replication and transcription. Forms a dodecahedral shell from 60 asymmetric dimers. Binds to RNA and may be involved in genomic packaging. This is Major inner protein P1 (P1) from Pseudomonas phage phi6 (Bacteriophage phi-6).